A 156-amino-acid chain; its full sequence is MPRRRVIGQRKILPDPKFKSELLAKFVNILMVDGKKSTAEKIVYTALEVMAEKSGKDHLAVFEEALENVRPAVEVKSRRVGGSTYQVPVEVRPVRRNALAMRWVVEAARKRGEKSMAQRLAAEMLDASENKGTSVKKREDVHRMADANKAFAHYRW.

Belongs to the universal ribosomal protein uS7 family. Part of the 30S ribosomal subunit. Contacts proteins S9 and S11.

Its function is as follows. One of the primary rRNA binding proteins, it binds directly to 16S rRNA where it nucleates assembly of the head domain of the 30S subunit. Is located at the subunit interface close to the decoding center, probably blocks exit of the E-site tRNA. This chain is Small ribosomal subunit protein uS7, found in Vibrio atlanticus (strain LGP32) (Vibrio splendidus (strain Mel32)).